Reading from the N-terminus, the 141-residue chain is Auxin-responsive protein SAUR64 (141 aa).

It belongs to the ARG7 family.

It is found in the cell membrane. May promote auxin-stimulated organ elongation, such as hypocotyls, stamen filaments and petals. The chain is Auxin-responsive protein SAUR64 from Arabidopsis thaliana (Mouse-ear cress).